The sequence spans 115 residues: Cobalt-zinc-cadmium resistance protein CzcI (115 aa).

An N-terminal signal peptide occupies residues 1-20 (MRRFVLIFVLLILPFQFSWA). Over residues 93–102 (QHSSEFSSLN) the composition is skewed to polar residues. Residues 93–115 (QHSSEFSSLNARAPDRPQWQRLA) form a disordered region.

The protein resides in the periplasm. Functionally, component of the czc cation-efflux system that confers resistance to cobalt, zinc and cadmium. May have a regulatory function. This is Cobalt-zinc-cadmium resistance protein CzcI (czcI) from Cupriavidus metallidurans (strain ATCC 43123 / DSM 2839 / NBRC 102507 / CH34) (Ralstonia metallidurans).